The chain runs to 106 residues: Immunoglobulin lambda constant 2 (106 aa).

The region spanning 7-101 (PSVTLFPPSS…EGSTVEKTVA (95 aa)) is the Ig-like domain. The cysteines at positions 28 and 87 are disulfide-linked.

In terms of assembly, immunoglobulins are composed of two identical heavy chains and two identical light chains; disulfide-linked.

Its subcellular location is the secreted. The protein localises to the cell membrane. Functionally, constant region of immunoglobulin light chains. Immunoglobulins, also known as antibodies, are membrane-bound or secreted glycoproteins produced by B lymphocytes. In the recognition phase of humoral immunity, the membrane-bound immunoglobulins serve as receptors which, upon binding of a specific antigen, trigger the clonal expansion and differentiation of B lymphocytes into immunoglobulins-secreting plasma cells. Secreted immunoglobulins mediate the effector phase of humoral immunity, which results in the elimination of bound antigens. The antigen binding site is formed by the variable domain of one heavy chain, together with that of its associated light chain. Thus, each immunoglobulin has two antigen binding sites with remarkable affinity for a particular antigen. The variable domains are assembled by a process called V-(D)-J rearrangement and can then be subjected to somatic hypermutations which, after exposure to antigen and selection, allow affinity maturation for a particular antigen. The protein is Immunoglobulin lambda constant 2 of Homo sapiens (Human).